The sequence spans 508 residues: uncharacterized protein (508 aa).

The Resolvase/invertase-type recombinase catalytic domain occupies 3–163 (KAIAYMRFSS…LSWKKKRQDA (161 aa)). Serine 11 (O-(5'-phospho-DNA)-serine intermediate) is an active-site residue. Positions 175–290 (PRWLSLDDKR…QEIRLAPFGI (116 aa)) form a DNA-binding region, recombinase.

This is an uncharacterized protein from Escherichia coli (strain K12).